Consider the following 64-residue polypeptide: MDDKTQTGNIDVRLLELLVCPLTKGPLEYDAEHGELISRKAKLAYPVRGGIPIMLPSEARSLTE.

Belongs to the UPF0434 family.

This Brucella anthropi (strain ATCC 49188 / DSM 6882 / CCUG 24695 / JCM 21032 / LMG 3331 / NBRC 15819 / NCTC 12168 / Alc 37) (Ochrobactrum anthropi) protein is UPF0434 protein Oant_3286.